The following is a 236-amino-acid chain: Phosphoribosylaminoimidazole-succinocarboxamide synthase (236 aa).

Belongs to the SAICAR synthetase family.

The enzyme catalyses 5-amino-1-(5-phospho-D-ribosyl)imidazole-4-carboxylate + L-aspartate + ATP = (2S)-2-[5-amino-1-(5-phospho-beta-D-ribosyl)imidazole-4-carboxamido]succinate + ADP + phosphate + 2 H(+). Its pathway is purine metabolism; IMP biosynthesis via de novo pathway; 5-amino-1-(5-phospho-D-ribosyl)imidazole-4-carboxamide from 5-amino-1-(5-phospho-D-ribosyl)imidazole-4-carboxylate: step 1/2. This Rickettsia prowazekii (strain Madrid E) protein is Phosphoribosylaminoimidazole-succinocarboxamide synthase (purC).